The sequence spans 582 residues: Formate--tetrahydrofolate ligase (582 aa).

Position 65 to 72 (65 to 72) interacts with ATP; it reads TPLGEGKT.

This sequence belongs to the formate--tetrahydrofolate ligase family.

It carries out the reaction (6S)-5,6,7,8-tetrahydrofolate + formate + ATP = (6R)-10-formyltetrahydrofolate + ADP + phosphate. Its pathway is one-carbon metabolism; tetrahydrofolate interconversion. The protein is Formate--tetrahydrofolate ligase of Vibrio campbellii (strain ATCC BAA-1116).